The following is a 378-amino-acid chain: Succinyl-diaminopimelate desuccinylase (378 aa).

H68 serves as a coordination point for Zn(2+). D70 is an active-site residue. D101 lines the Zn(2+) pocket. Catalysis depends on E135, which acts as the Proton acceptor. The Zn(2+) site is built by E136, E164, and H350.

This sequence belongs to the peptidase M20A family. DapE subfamily. In terms of assembly, homodimer. Requires Zn(2+) as cofactor. Co(2+) serves as cofactor.

It carries out the reaction N-succinyl-(2S,6S)-2,6-diaminopimelate + H2O = (2S,6S)-2,6-diaminopimelate + succinate. Its pathway is amino-acid biosynthesis; L-lysine biosynthesis via DAP pathway; LL-2,6-diaminopimelate from (S)-tetrahydrodipicolinate (succinylase route): step 3/3. Its function is as follows. Catalyzes the hydrolysis of N-succinyl-L,L-diaminopimelic acid (SDAP), forming succinate and LL-2,6-diaminopimelate (DAP), an intermediate involved in the bacterial biosynthesis of lysine and meso-diaminopimelic acid, an essential component of bacterial cell walls. The polypeptide is Succinyl-diaminopimelate desuccinylase (Acinetobacter baumannii (strain ACICU)).